Consider the following 275-residue polypeptide: NH(3)-dependent NAD(+) synthetase (275 aa).

Residue 47–54 participates in ATP binding; the sequence is GISGGQDS. Mg(2+) is bound at residue Asp-53. Arg-141 lines the deamido-NAD(+) pocket. Residue Thr-161 coordinates ATP. Glu-166 provides a ligand contact to Mg(2+). Residues Lys-174 and Asp-181 each contribute to the deamido-NAD(+) site. The ATP site is built by Lys-190 and Thr-212. 261–262 contributes to the deamido-NAD(+) binding site; the sequence is HK.

It belongs to the NAD synthetase family. As to quaternary structure, homodimer.

The enzyme catalyses deamido-NAD(+) + NH4(+) + ATP = AMP + diphosphate + NAD(+) + H(+). It functions in the pathway cofactor biosynthesis; NAD(+) biosynthesis; NAD(+) from deamido-NAD(+) (ammonia route): step 1/1. In terms of biological role, catalyzes the ATP-dependent amidation of deamido-NAD to form NAD. Uses ammonia as a nitrogen source. This is NH(3)-dependent NAD(+) synthetase from Lacticaseibacillus casei (strain BL23) (Lactobacillus casei).